The following is a 399-amino-acid chain: Ornithine aminotransferase (399 aa).

The residue at position 255 (K255) is an N6-(pyridoxal phosphate)lysine.

The protein belongs to the class-III pyridoxal-phosphate-dependent aminotransferase family. OAT subfamily. Pyridoxal 5'-phosphate is required as a cofactor.

The protein localises to the cytoplasm. The enzyme catalyses a 2-oxocarboxylate + L-ornithine = L-glutamate 5-semialdehyde + an L-alpha-amino acid. Its pathway is amino-acid biosynthesis; L-proline biosynthesis; L-glutamate 5-semialdehyde from L-ornithine: step 1/1. Functionally, catalyzes the interconversion of ornithine to glutamate semialdehyde. The protein is Ornithine aminotransferase of Brevibacillus brevis (strain 47 / JCM 6285 / NBRC 100599).